The chain runs to 327 residues: Pyruvate dehydrogenase E1 component subunit beta (327 aa).

E63 is a binding site for thiamine diphosphate.

In terms of assembly, heterodimer of an alpha and a beta chain. The cofactor is thiamine diphosphate.

It catalyses the reaction N(6)-[(R)-lipoyl]-L-lysyl-[protein] + pyruvate + H(+) = N(6)-[(R)-S(8)-acetyldihydrolipoyl]-L-lysyl-[protein] + CO2. The pyruvate dehydrogenase complex catalyzes the overall conversion of pyruvate to acetyl-CoA and CO(2). It contains multiple copies of three enzymatic components: pyruvate dehydrogenase (E1), dihydrolipoamide acetyltransferase (E2) and lipoamide dehydrogenase (E3). The sequence is that of Pyruvate dehydrogenase E1 component subunit beta (pdhB) from Mycoplasma pneumoniae (strain ATCC 29342 / M129 / Subtype 1) (Mycoplasmoides pneumoniae).